We begin with the raw amino-acid sequence, 3323 residues long: Mucin-3A (3323 aa).

An N-terminal signal peptide occupies residues Met-1 to Ala-15. Disordered regions lie at residues Thr-218 to Thr-243, Thr-270 to Thr-289, Ile-325 to Thr-345, Gly-359 to Ala-380, Met-539 to Glu-677, Asn-700 to Ser-722, Glu-734 to Lys-756, Ser-909 to Pro-991, Ile-1170 to Thr-1201, Ala-1318 to Ser-1356, Ala-1380 to Val-1442, Thr-1484 to Lys-1509, Thr-1714 to Ser-1746, Phe-1793 to Ser-1844, and Thr-1900 to Thr-2056. Low complexity predominate over residues Thr-270–Thr-284. The span at Gly-545–His-563 shows a compositional bias: polar residues. Over residues Thr-564–Thr-618 the composition is skewed to low complexity. Over residues Asp-619–Met-629 the composition is skewed to polar residues. Over residues Thr-630–Thr-676 the composition is skewed to low complexity. The span at Asn-700–Asn-721 shows a compositional bias: polar residues. Over residues Ser-909–Ser-918 the composition is skewed to low complexity. The span at Ala-919–Gly-932 shows a compositional bias: polar residues. The span at Thr-933–Pro-991 shows a compositional bias: low complexity. Positions Pro-1324–Ser-1356 are enriched in low complexity. Repeat copies occupy residues Val-1893 to Ser-1910, Ile-1911 to Ser-1927, Ile-1928 to Ser-1944, Ile-1945 to Ser-1961, Ile-1962 to Ser-1978, Ile-1979 to Leu-1995, Ile-1996 to Ser-2012, Ile-2013 to Ser-2029, Ile-2030 to Ser-2046, Ile-2047 to Leu-2062, Ile-2063 to Ser-2079, Ile-2080 to Ser-2096, Ile-2097 to Ser-2113, Ile-2114 to Ser-2130, Ile-2131 to Ser-2147, Ile-2148 to Leu-2164, Ile-2165 to Ser-2191, Asn-2192 to Ser-2208, Ile-2209 to Ser-2225, Ile-2226 to Ser-2242, Ile-2243 to Ser-2259, Ile-2260 to Ser-2276, Ile-2277 to Leu-2293, Ile-2294 to Ser-2310, Ile-2311 to Ser-2327, Ile-2328 to Ser-2344, Ile-2345 to Ser-2361, Ile-2362 to Ser-2378, Ile-2379 to Trp-2395, Val-2396 to Ser-2412, Ile-2413 to Ser-2429, and Ile-2430 to Ser-2446. A 32 X approximate tandem repeats, Ser/Thr-rich region spans residues Val-1893–Ser-2446. Residues Phe-1907–Asn-1947 are compositionally biased toward polar residues. Residues Thr-1948–Thr-2056 are compositionally biased toward low complexity. Low complexity-rich tracts occupy residues Thr-2100 to Thr-2170, Thr-2177 to Thr-2384, Thr-2393 to Thr-2447, and Thr-2464 to Thr-2507. Disordered stretches follow at residues Thr-2100–Thr-2447, Thr-2464–Asp-2508, Thr-2578–Thr-2608, Ile-2631–Ser-2656, Met-2834–Asn-2858, and Ser-2897–Arg-2937. A compositionally biased stretch (polar residues) spans Thr-2578 to Gly-2602. Low complexity-rich tracts occupy residues Ser-2633 to Ser-2656, Met-2834 to Ser-2849, and Thr-2905 to Arg-2937. In terms of domain architecture, EGF-like spans Ser-2976–Glu-3009. 2 cysteine pairs are disulfide-bonded: Cys-2980/Cys-2986 and Cys-2999/Cys-3008. Residues Asp-3018–Lys-3143 form the SEA domain. A helical transmembrane segment spans residues Leu-3227–Val-3247.

Highly O-glycosylated and probably also N-glycosylated. In terms of tissue distribution, broad specificity; small intestine, colon, colonic tumors, heart, liver, thymus, prostate, pancreas and gall bladder.

Its subcellular location is the membrane. The protein resides in the secreted. Functionally, major glycoprotein component of a variety of mucus gels. Thought to provide a protective, lubricating barrier against particles and infectious agents at mucosal surfaces. May be involved in ligand binding and intracellular signaling. The sequence is that of Mucin-3A from Homo sapiens (Human).